Here is a 948-residue protein sequence, read N- to C-terminus: Putative helicase 009L (948 aa).

In terms of domain architecture, Helicase ATP-binding spans Leu64 to Gln243. Position 77 to 84 (His77 to Thr84) interacts with ATP. The DEAH box signature appears at Asp187–His190. A Helicase C-terminal domain is found at Val371–Ala554.

This chain is Putative helicase 009L, found in Frog virus 3 (isolate Goorha) (FV-3).